Here is a 150-residue protein sequence, read N- to C-terminus: Protein Smg homolog (150 aa).

Belongs to the Smg family.

The protein is Protein Smg homolog of Methylobacillus flagellatus (strain ATCC 51484 / DSM 6875 / VKM B-1610 / KT).